The primary structure comprises 422 residues: Serine--tRNA ligase (422 aa).

Position 229–231 (229–231) interacts with L-serine; the sequence is TAE. Position 260 to 262 (260 to 262) interacts with ATP; sequence RRE. Glu283 contacts L-serine. 347-350 contacts ATP; that stretch reads EISS. Ser383 is an L-serine binding site.

Belongs to the class-II aminoacyl-tRNA synthetase family. Type-1 seryl-tRNA synthetase subfamily. As to quaternary structure, homodimer. The tRNA molecule binds across the dimer.

It is found in the cytoplasm. It carries out the reaction tRNA(Ser) + L-serine + ATP = L-seryl-tRNA(Ser) + AMP + diphosphate + H(+). The enzyme catalyses tRNA(Sec) + L-serine + ATP = L-seryl-tRNA(Sec) + AMP + diphosphate + H(+). Its pathway is aminoacyl-tRNA biosynthesis; selenocysteinyl-tRNA(Sec) biosynthesis; L-seryl-tRNA(Sec) from L-serine and tRNA(Sec): step 1/1. Catalyzes the attachment of serine to tRNA(Ser). Is also able to aminoacylate tRNA(Sec) with serine, to form the misacylated tRNA L-seryl-tRNA(Sec), which will be further converted into selenocysteinyl-tRNA(Sec). The polypeptide is Serine--tRNA ligase (Pelobacter propionicus (strain DSM 2379 / NBRC 103807 / OttBd1)).